Consider the following 314-residue polypeptide: MARLPILLLLISLVYSTPSPQTSKKIGDDATLSCNRNNTTDYVVMSAWYKEPNSIILLAAKSDVLYFDNYTKDKISYDSPYDDLVTTITIKSLTARDAGTYVCAFFMTSTTNDTDKVDYEEYSTELIVNTDSESTIDIILSGSTHSPETSSEKPDYIDNSNCSSVFEIATPEPITDNEEDHTDVTYTSENINTVSTTSRESTTDETPEPITDKEEDHTVTDTVSYTTVSTSSGIVTTKSTTDDADLYDTYNDNDTVPPTTVGGSTTSISNYKTKDFVEIFGITALIILSAVAIFCITYYICNKRSRKYKTENKV.

The N-terminal stretch at methionine 1–serine 16 is a signal peptide. The region spanning threonine 17–glutamate 121 is the Ig-like V-type domain. Over threonine 17 to glutamate 278 the chain is Virion surface. Cysteine 34 and cysteine 103 are oxidised to a cystine. Asparagine 37, asparagine 38, asparagine 69, asparagine 112, and asparagine 161 each carry an N-linked (GlcNAc...) asparagine; by host glycan. A disordered region spans residues asparagine 192–histidine 217. Residue asparagine 253 is glycosylated (N-linked (GlcNAc...) asparagine; by host). Residues isoleucine 279–asparagine 302 form a helical membrane-spanning segment. Topologically, residues lysine 303–valine 314 are intravirion.

This sequence belongs to the orthopoxvirus OPG185 family. Heterodimerizes with OPG040. The heterodimer OPG185-OPG040 interacts with components of the entry fusion complex OPG143 and OPG094. Heterodimer with C3/VPC protein; disulfide-linked. Glycosylated; contains phosphate and sulfate-substituted glycans. O-glycosylation is required for hemagglutination and hemadsorption activities of infected cell membranes.

The protein localises to the virion membrane. It is found in the host membrane. Functionally, prevents cell to cell fusion by interacting with and directing the viral OPG040 protein on the host plasma membrane. The OPG185-OPG040 complex associates with components of the entry fusion complex (EFC) presumably to avoid superinfection and syncytium formation. Via its interaction with C3/VCP protein, protects the infected cell and probably also the extracellular enveloped virus from complement attack. The polypeptide is Protein OPG185 (OPG185) (Bos taurus (Bovine)).